The following is a 366-amino-acid chain: Erythronate-4-phosphate dehydrogenase (366 aa).

Substrate is bound by residues serine 46 and threonine 67. NAD(+)-binding residues include aspartate 147 and threonine 175. Residue arginine 208 is part of the active site. Aspartate 228 provides a ligand contact to NAD(+). Residue glutamate 233 is part of the active site. Histidine 250 functions as the Proton donor in the catalytic mechanism. An NAD(+)-binding site is contributed by glycine 253. Position 254 (tyrosine 254) interacts with substrate.

The protein belongs to the D-isomer specific 2-hydroxyacid dehydrogenase family. PdxB subfamily. Homodimer.

The protein localises to the cytoplasm. It catalyses the reaction 4-phospho-D-erythronate + NAD(+) = (R)-3-hydroxy-2-oxo-4-phosphooxybutanoate + NADH + H(+). Its pathway is cofactor biosynthesis; pyridoxine 5'-phosphate biosynthesis; pyridoxine 5'-phosphate from D-erythrose 4-phosphate: step 2/5. In terms of biological role, catalyzes the oxidation of erythronate-4-phosphate to 3-hydroxy-2-oxo-4-phosphonooxybutanoate. The chain is Erythronate-4-phosphate dehydrogenase from Coxiella burnetii (strain Dugway 5J108-111).